Reading from the N-terminus, the 965-residue chain is Vacuolar protein sorting-associated protein 54 (965 aa).

S8 is modified (phosphoserine). Residues E228 to Q249 are a coiled coil. The segment at A516 to A558 is disordered. Positions V520–A558 are enriched in polar residues.

Belongs to the VPS54 family. As to quaternary structure, component of the Golgi-associated retrograde protein (GARP) complex, also called VFT (VPS fifty-three) complex, composed of VPS51, VPS52, VPS53 and VPS54. EIPR1 interacts with GARP complex and mediates its recruitment to the trans-Golgi network. Interacts with VPS51 in an EIPR1-independent manner. In terms of tissue distribution, ubiquitously expressed at low level.

It is found in the golgi apparatus. The protein localises to the trans-Golgi network. It localises to the membrane. In terms of biological role, acts as a component of the GARP complex that is involved in retrograde transport from early and late endosomes to the trans-Golgi network (TGN). The GARP complex is required for the maintenance of the cycling of mannose 6-phosphate receptors between the TGN and endosomes, this cycling is necessary for proper lysosomal sorting of acid hydrolases such as CTSD. Within the GARP complex, required to tether the complex to the TGN. Not involved in endocytic recycling. The polypeptide is Vacuolar protein sorting-associated protein 54 (Vps54) (Rattus norvegicus (Rat)).